Here is a 396-residue protein sequence, read N- to C-terminus: Bifunctional enzyme Fae/Hps (396 aa).

Residues 1–161 (MYQIGEALIG…YEKDRGVHAI (161 aa)) are formaldehyde-activating enzyme. The active-site Proton donor is the H17. The substrate site is built by D19, L48, K66, T68, and Q83. Residues 162-396 (MGYKITRLWD…IDQYRIMTDF (235 aa)) are 3-hexulose-6-phosphate synthase.

This sequence in the N-terminal section; belongs to the formaldehyde-activating enzyme family. In the C-terminal section; belongs to the HPS/KGPDC family. HPS subfamily.

It carries out the reaction 5,6,7,8-tetrahydromethanopterin + formaldehyde = 5,10-methylenetetrahydromethanopterin + H2O. It catalyses the reaction D-ribulose 5-phosphate + formaldehyde = D-arabino-hex-3-ulose 6-phosphate. It functions in the pathway carbohydrate biosynthesis; D-ribose 5-phosphate biosynthesis. In terms of biological role, catalyzes the condensation of formaldehyde with tetrahydromethanopterin (H(4)MPT) to 5,10-methylenetetrahydromethanopterin. Catalyzes the reversible formation of ribulose-5-phosphate and formaldehyde from 3-hexulose-6-phosphate. The protein is Bifunctional enzyme Fae/Hps of Methanocella arvoryzae (strain DSM 22066 / NBRC 105507 / MRE50).